The primary structure comprises 332 residues: Glycerol-3-phosphate dehydrogenase [NAD(P)+] (332 aa).

Positions 13, 34, and 108 each coordinate NADPH. Sn-glycerol 3-phosphate contacts are provided by Lys108, Gly136, and Ser138. Ala140 is a binding site for NADPH. 5 residues coordinate sn-glycerol 3-phosphate: Lys191, Asp244, Ser254, Arg255, and Asn256. Lys191 acts as the Proton acceptor in catalysis. NADPH is bound at residue Arg255. NADPH-binding residues include Val279 and Glu281.

Belongs to the NAD-dependent glycerol-3-phosphate dehydrogenase family.

It is found in the cytoplasm. It catalyses the reaction sn-glycerol 3-phosphate + NAD(+) = dihydroxyacetone phosphate + NADH + H(+). The catalysed reaction is sn-glycerol 3-phosphate + NADP(+) = dihydroxyacetone phosphate + NADPH + H(+). It functions in the pathway membrane lipid metabolism; glycerophospholipid metabolism. Functionally, catalyzes the reduction of the glycolytic intermediate dihydroxyacetone phosphate (DHAP) to sn-glycerol 3-phosphate (G3P), the key precursor for phospholipid synthesis. The polypeptide is Glycerol-3-phosphate dehydrogenase [NAD(P)+] (Francisella tularensis subsp. mediasiatica (strain FSC147)).